Reading from the N-terminus, the 66-residue chain is Large ribosomal subunit protein uL29 (66 aa).

It belongs to the universal ribosomal protein uL29 family.

This is Large ribosomal subunit protein uL29 from Thermotoga sp. (strain RQ2).